The primary structure comprises 418 residues: Actin-like protein 7B (418 aa).

A disordered region spans residues 1–42 (MATKNSPSPKPMGTAQGDPGEAGTLPAPEAAGIRDTGSTQLK). At serine 8 the chain carries Phosphoserine.

Belongs to the actin family. In terms of tissue distribution, testis specific.

Its subcellular location is the cytoplasm. It localises to the cytoskeleton. The protein is Actin-like protein 7B (Actl7b) of Mus musculus (Mouse).